A 569-amino-acid chain; its full sequence is Nucleoprotein (569 aa).

Residues 54–241 form a binding site for the cap structure m7GTP region; sequence MRKERRDDND…IDTKKSSLNI (188 aa). Residues aspartate 389 and glutamate 391 each coordinate Mn(2+). Zn(2+) is bound by residues glutamate 399, cysteine 506, histidine 509, and cysteine 529. Aspartate 533 lines the Mn(2+) pocket.

The protein belongs to the arenaviridae nucleocapsid protein family. In terms of assembly, homomultimerizes to form the nucleocapsid. Binds to viral genomic RNA. Interacts with glycoprotein G2. Interacts with protein Z; this interaction probably directs the encapsidated genome to budding sites. Interacts with protein L; this interaction does not interfere with Z-L interaction. Interacts with host IKBKE (via Protein kinase domain); the interaction inhibits IKBKE kinase activity.

It is found in the virion. The protein resides in the host cytoplasm. Functionally, encapsidates the genome, protecting it from nucleases. The encapsidated genomic RNA is termed the nucleocapsid (NC). Serves as template for viral transcription and replication. The increased presence of protein N in host cell does not seem to trigger the switch from transcription to replication as observed in other negative strain RNA viruses. Through the interaction with host IKBKE, strongly inhibits the phosphorylation and nuclear translocation of host IRF3, a protein involved in interferon activation pathway, leading to the inhibition of interferon-beta and IRF3-dependent promoters activation. Also encodes a functional 3'-5' exoribonuclease that degrades preferentially dsRNA substrates and thereby participates in the suppression of interferon induction. The polypeptide is Nucleoprotein (Lassa virus (strain Mouse/Sierra Leone/Josiah/1976) (LASV)).